Reading from the N-terminus, the 338-residue chain is Calcium uniporter protein 4, mitochondrial (338 aa).

The N-terminal 36 residues, 1–36 (MVMMKKLLSNRLFNMSKTASQSLMNCRTSSSSSLAM), are a transit peptide targeting the mitochondrion. The chain crosses the membrane as a helical span at residues 233 to 253 (LWAGLGYLIIQTAGFMRLTFW). Residues 257–265 (WDVMEPICF) carry the Selectivity filter motif. E261 is a binding site for Ca(2+). A helical transmembrane segment spans residues 263–280 (ICFYVSSVYFMAGYTFFL).

The protein belongs to the MCU (TC 1.A.77) family.

The protein localises to the mitochondrion inner membrane. The catalysed reaction is Ca(2+)(in) = Ca(2+)(out). In terms of biological role, mitochondrial inner membrane calcium uniporter that mediates calcium uptake into mitochondria. Constitutes a pore-forming and calcium-conducting subunit. Mitochondrial calcium homeostasis plays key roles in cellular physiology and regulates cell bioenergetics, cytoplasmic calcium signals and activation of cell death pathways. The sequence is that of Calcium uniporter protein 4, mitochondrial from Arabidopsis thaliana (Mouse-ear cress).